The sequence spans 82 residues: MRLVVCLVFLAPFALVCHGQVYKGGYTRPIPRPPPFVRPLPGGPIGPYNGCPVSCRGISFSQARSCCSRLGRCCHVGKGYSG.

A signal peptide spans 1–19 (MRLVVCLVFLAPFALVCHG). A Pyrrolidone carboxylic acid modification is found at Gln-20. Disulfide bonds link Cys-51–Cys-66, Cys-55–Cys-73, and Cys-67–Cys-74. Serine amide is present on Ser-81.

This sequence belongs to the penaeidin family.

It is found in the cytoplasmic granule. Its function is as follows. Antibacterial and antifungal activity. Presents chitin-binding activity. This is Penaeidin-3e from Penaeus vannamei (Whiteleg shrimp).